Reading from the N-terminus, the 91-residue chain is Acylphosphatase (91 aa).

Residues 3 to 91 (CLRAIVKGKV…ANYSDFRIKH (89 aa)) form the Acylphosphatase-like domain. Active-site residues include Arg-18 and Asn-36.

Belongs to the acylphosphatase family.

The catalysed reaction is an acyl phosphate + H2O = a carboxylate + phosphate + H(+). The protein is Acylphosphatase (acyP) of Dehalococcoides mccartyi (strain ATCC BAA-2100 / JCM 16839 / KCTC 5957 / BAV1).